We begin with the raw amino-acid sequence, 37 residues long: Cytochrome b6-f complex subunit 5 (37 aa).

A helical transmembrane segment spans residues 5–25 (LLSGIVLGLVPVTIAGLFVTA).

This sequence belongs to the PetG family. In terms of assembly, the 4 large subunits of the cytochrome b6-f complex are cytochrome b6, subunit IV (17 kDa polypeptide, PetD), cytochrome f and the Rieske protein, while the 4 small subunits are PetG, PetL, PetM and PetN. The complex functions as a dimer.

The protein localises to the plastid. It is found in the chloroplast thylakoid membrane. Its function is as follows. Component of the cytochrome b6-f complex, which mediates electron transfer between photosystem II (PSII) and photosystem I (PSI), cyclic electron flow around PSI, and state transitions. PetG is required for either the stability or assembly of the cytochrome b6-f complex. This is Cytochrome b6-f complex subunit 5 from Stigeoclonium helveticum (Green alga).